The primary structure comprises 257 residues: Ribosomal RNA small subunit methyltransferase J (257 aa).

S-adenosyl-L-methionine-binding positions include 107–108 (RD), 123–124 (ER), and Asp-177.

This sequence belongs to the methyltransferase superfamily. RsmJ family.

It is found in the cytoplasm. The enzyme catalyses guanosine(1516) in 16S rRNA + S-adenosyl-L-methionine = N(2)-methylguanosine(1516) in 16S rRNA + S-adenosyl-L-homocysteine + H(+). In terms of biological role, specifically methylates the guanosine in position 1516 of 16S rRNA. This Haemophilus influenzae (strain ATCC 51907 / DSM 11121 / KW20 / Rd) protein is Ribosomal RNA small subunit methyltransferase J.